Consider the following 201-residue polypeptide: Oxalate oxidase 1 (201 aa).

Cysteines 10 and 26 form a disulfide. In terms of domain architecture, Cupin type-1 spans 40 to 191; sequence SKLTKAGNTS…ALRVEAGVVE (152 aa). The N-linked (GlcNAc...) asparagine glycan is linked to asparagine 47. Residues asparagine 75 and asparagine 85 each contribute to the oxalate site. Mn(2+) is bound by residues histidine 88, histidine 90, glutamate 95, and histidine 137. Residues histidine 90 and glutamate 95 each contribute to the oxalate site.

Belongs to the germin family. In terms of assembly, homo hexamer; a trimer of dimers. Glycosylated. A form called G contains antennary GlcNAc residues, whereas a form called G' lacks antennary GlcNAc residues in its otherwise identical glycans.

It is found in the secreted. Its subcellular location is the extracellular space. The protein localises to the apoplast. It localises to the cell wall. It catalyses the reaction oxalate + O2 + 2 H(+) = H2O2 + 2 CO2. Releases hydrogen peroxide in the apoplast which may be important for cross-linking reactions in the cell wall biochemistry. May play an important role in several aspects of plant growth and defense mechanisms. The chain is Oxalate oxidase 1 from Hordeum vulgare (Barley).